The following is a 263-amino-acid chain: tRNA pseudouridine synthase A (263 aa).

Aspartate 73 functions as the Nucleophile in the catalytic mechanism. Residue tyrosine 131 coordinates substrate.

This sequence belongs to the tRNA pseudouridine synthase TruA family. As to quaternary structure, homodimer.

It carries out the reaction uridine(38/39/40) in tRNA = pseudouridine(38/39/40) in tRNA. Functionally, formation of pseudouridine at positions 38, 39 and 40 in the anticodon stem and loop of transfer RNAs. In Mycoplasmoides gallisepticum (strain R(low / passage 15 / clone 2)) (Mycoplasma gallisepticum), this protein is tRNA pseudouridine synthase A.